We begin with the raw amino-acid sequence, 504 residues long: 2,3-bisphosphoglycerate-independent phosphoglycerate mutase (504 aa).

Mn(2+) is bound by residues aspartate 11 and serine 61. Serine 61 serves as the catalytic Phosphoserine intermediate. Residues histidine 122, 152–153 (RD), arginine 183, arginine 189, 255–258 (RNDR), and lysine 329 each bind substrate. Mn(2+) contacts are provided by aspartate 396, histidine 400, aspartate 437, histidine 438, and histidine 455.

This sequence belongs to the BPG-independent phosphoglycerate mutase family. As to quaternary structure, monomer. The cofactor is Mn(2+).

It carries out the reaction (2R)-2-phosphoglycerate = (2R)-3-phosphoglycerate. Its pathway is carbohydrate degradation; glycolysis; pyruvate from D-glyceraldehyde 3-phosphate: step 3/5. Its function is as follows. Catalyzes the interconversion of 2-phosphoglycerate and 3-phosphoglycerate. In Bacteroides fragilis (strain YCH46), this protein is 2,3-bisphosphoglycerate-independent phosphoglycerate mutase.